Reading from the N-terminus, the 429-residue chain is Glutamate-1-semialdehyde 2,1-aminomutase 2 (429 aa).

K268 bears the N6-(pyridoxal phosphate)lysine mark.

This sequence belongs to the class-III pyridoxal-phosphate-dependent aminotransferase family. HemL subfamily. In terms of assembly, homodimer. It depends on pyridoxal 5'-phosphate as a cofactor.

The protein localises to the cytoplasm. The enzyme catalyses (S)-4-amino-5-oxopentanoate = 5-aminolevulinate. It participates in porphyrin-containing compound metabolism; protoporphyrin-IX biosynthesis; 5-aminolevulinate from L-glutamyl-tRNA(Glu): step 2/2. In Bacillus velezensis (strain DSM 23117 / BGSC 10A6 / LMG 26770 / FZB42) (Bacillus amyloliquefaciens subsp. plantarum), this protein is Glutamate-1-semialdehyde 2,1-aminomutase 2.